A 385-amino-acid chain; its full sequence is Succinate--CoA ligase [ADP-forming] subunit beta (385 aa).

An ATP-grasp domain is found at 9-240 (KEIFAKYGIP…ETQLPQLEVE (232 aa)). ATP contacts are provided by residues lysine 46, 53–55 (GRG), glutamate 98, threonine 101, and glutamate 106. 2 residues coordinate Mg(2+): asparagine 195 and aspartate 209. Substrate contacts are provided by residues asparagine 260 and 317 to 319 (GIL).

This sequence belongs to the succinate/malate CoA ligase beta subunit family. In terms of assembly, heterotetramer of two alpha and two beta subunits. Mg(2+) is required as a cofactor.

The enzyme catalyses succinate + ATP + CoA = succinyl-CoA + ADP + phosphate. It carries out the reaction GTP + succinate + CoA = succinyl-CoA + GDP + phosphate. Its pathway is carbohydrate metabolism; tricarboxylic acid cycle; succinate from succinyl-CoA (ligase route): step 1/1. Its function is as follows. Succinyl-CoA synthetase functions in the citric acid cycle (TCA), coupling the hydrolysis of succinyl-CoA to the synthesis of either ATP or GTP and thus represents the only step of substrate-level phosphorylation in the TCA. The beta subunit provides nucleotide specificity of the enzyme and binds the substrate succinate, while the binding sites for coenzyme A and phosphate are found in the alpha subunit. The sequence is that of Succinate--CoA ligase [ADP-forming] subunit beta from Aquifex aeolicus (strain VF5).